The following is a 2053-amino-acid chain: Integrator complex subunit 1 (2053 aa).

2 disordered regions span residues 36-58 and 249-285; these read KILP…ALAS and SLPS…ESEP. Positions 268–283 are enriched in polar residues; it reads DNSTQSLDASPLNTES. Residues 708-728 form a helical membrane-spanning segment; the sequence is LAIIAFYWKAWLILLMISAHN.

Belongs to the Integrator subunit 1 family. In terms of assembly, belongs to the multiprotein complex Integrator, at least composed of IntS1, IntS2, IntS3, IntS4, omd/IntS5, IntS6, defl/IntS7, IntS8, IntS9, IntS10, IntS11, IntS12, asun/IntS13, IntS14 and IntS15. The core complex associates with protein phosphatase 2A subunits mts/PP2A and Pp2A-29B, to form the Integrator-PP2A (INTAC) complex. Within the complex, interacts with IntS12 and IntS9. Interaction with IntS12 is likely to be important for promoting 3'-end processing of snRNAs. Interacts with Mediator complex members Cdk8 and CycC.

Its subcellular location is the nucleus membrane. The protein resides in the nucleus. In terms of biological role, component of the integrator complex, a multiprotein complex that terminates RNA polymerase II (Pol II) transcription in the promoter-proximal region of genes. The integrator complex provides a quality checkpoint during transcription elongation by driving premature transcription termination of transcripts that are unfavorably configured for transcriptional elongation: the complex terminates transcription by (1) catalyzing dephosphorylation of the C-terminal domain (CTD) of Pol II subunit Polr2A/Rbp1 and Spt5, and (2) degrading the exiting nascent RNA transcript via endonuclease activity. The integrator complex is also involved in the 3'-end processing of the U7 snRNA, and also the spliceosomal snRNAs U1, U2, U4 and U5. Required for the normal expression of the Integrator complex component IntS12. This is Integrator complex subunit 1 from Drosophila melanogaster (Fruit fly).